A 302-amino-acid chain; its full sequence is N(G),N(G)-dimethylarginine dimethylaminohydrolase (302 aa).

Residues Asp-102, Arg-127, and Arg-172 each contribute to the substrate site. The Proton donor role is filled by His-201. Cys-295 serves as the catalytic Nucleophile.

It belongs to the DDAH family.

It carries out the reaction N(omega),N(omega)-dimethyl-L-arginine + H2O = dimethylamine + L-citrulline. The catalysed reaction is N(omega)-methyl-L-arginine + H2O = L-citrulline + methylamine. Hydrolyzes N(G),N(G)-dimethyl-L-arginine (ADMA) and N(G)-monomethyl-L-arginine (MMA). The sequence is that of N(G),N(G)-dimethylarginine dimethylaminohydrolase from Mycobacterium tuberculosis (strain ATCC 25618 / H37Rv).